Reading from the N-terminus, the 366-residue chain is Carbamoyl phosphate synthase small chain (366 aa).

Residues 1-171 (MKKRKLILED…KPYVVPGRGL (171 aa)) form a CPSase region. Positions 46, 220, and 222 each coordinate L-glutamine. A Glutamine amidotransferase type-1 domain is found at 172–359 (RVVMVDFGAK…LNLIKASKVK (188 aa)). The active-site Nucleophile is the C247. Residues L248, Q251, N289, and Y292 each contribute to the L-glutamine site. Residues H332 and E334 contribute to the active site.

The protein belongs to the CarA family. As to quaternary structure, composed of two chains; the small (or glutamine) chain promotes the hydrolysis of glutamine to ammonia, which is used by the large (or ammonia) chain to synthesize carbamoyl phosphate. Tetramer of heterodimers (alpha,beta)4.

It catalyses the reaction hydrogencarbonate + L-glutamine + 2 ATP + H2O = carbamoyl phosphate + L-glutamate + 2 ADP + phosphate + 2 H(+). The catalysed reaction is L-glutamine + H2O = L-glutamate + NH4(+). The protein operates within amino-acid biosynthesis; L-arginine biosynthesis; carbamoyl phosphate from bicarbonate: step 1/1. Its pathway is pyrimidine metabolism; UMP biosynthesis via de novo pathway; (S)-dihydroorotate from bicarbonate: step 1/3. Its function is as follows. Small subunit of the glutamine-dependent carbamoyl phosphate synthetase (CPSase). CPSase catalyzes the formation of carbamoyl phosphate from the ammonia moiety of glutamine, carbonate, and phosphate donated by ATP, constituting the first step of 2 biosynthetic pathways, one leading to arginine and/or urea and the other to pyrimidine nucleotides. The small subunit (glutamine amidotransferase) binds and cleaves glutamine to supply the large subunit with the substrate ammonia. The protein is Carbamoyl phosphate synthase small chain of Oceanobacillus iheyensis (strain DSM 14371 / CIP 107618 / JCM 11309 / KCTC 3954 / HTE831).